A 282-amino-acid polypeptide reads, in one-letter code: 4-diphosphocytidyl-2-C-methyl-D-erythritol kinase (282 aa).

The active site involves Lys-9. An ATP-binding site is contributed by 98–108 (PMGGGLGGGSS). The active site involves Asp-140.

This sequence belongs to the GHMP kinase family. IspE subfamily. In terms of assembly, homodimer.

It catalyses the reaction 4-CDP-2-C-methyl-D-erythritol + ATP = 4-CDP-2-C-methyl-D-erythritol 2-phosphate + ADP + H(+). It functions in the pathway isoprenoid biosynthesis; isopentenyl diphosphate biosynthesis via DXP pathway; isopentenyl diphosphate from 1-deoxy-D-xylulose 5-phosphate: step 3/6. In terms of biological role, catalyzes the phosphorylation of the position 2 hydroxy group of 4-diphosphocytidyl-2C-methyl-D-erythritol. In Salmonella schwarzengrund (strain CVM19633), this protein is 4-diphosphocytidyl-2-C-methyl-D-erythritol kinase.